Consider the following 429-residue polypeptide: DNA polymerase delta small subunit (429 aa).

It belongs to the DNA polymerase delta/II small subunit family. As to quaternary structure, heterodimer with subunits of 125 kDa and 50 kDa.

The protein localises to the nucleus. It carries out the reaction DNA(n) + a 2'-deoxyribonucleoside 5'-triphosphate = DNA(n+1) + diphosphate. In terms of biological role, the function of the small subunit is not yet clear. This Oryza sativa subsp. japonica (Rice) protein is DNA polymerase delta small subunit (POLD2).